We begin with the raw amino-acid sequence, 251 residues long: Chlorophyll a-b binding protein 4, chloroplastic (251 aa).

Ser-35 bears the Phosphoserine mark. Position 57 (Trp-57) interacts with chlorophyll b. Residues Phe-77 and Glu-96 each coordinate chlorophyll a. Arg-101 contributes to the chlorophyll b binding site. The next 2 helical transmembrane spans lie at Trp-102 to Ile-122 and Tyr-135 to Ile-155. Residues Ser-138, Val-144, Glu-154, and Arg-157 each contribute to the chlorophyll b site. The chlorophyll a site is built by Lys-204, Glu-205, Asn-208, Arg-210, Gln-222, and His-237.

Belongs to the light-harvesting chlorophyll a/b-binding (LHC) protein family. The LHC complex consists of chlorophyll a-b binding proteins. Red-emitting heterodimer with LHCA1. Binds at least 14 chlorophylls (8 Chl-a and 6 Chl-b) and carotenoids such as lutein and neoxanthin. is required as a cofactor. Post-translationally, photoregulated by reversible phosphorylation of its threonine residues.

The protein resides in the plastid. Its subcellular location is the chloroplast thylakoid membrane. In terms of biological role, the light-harvesting complex (LHC) functions as a light receptor, it captures and delivers excitation energy to photosystems with which it is closely associated. The polypeptide is Chlorophyll a-b binding protein 4, chloroplastic (Arabidopsis thaliana (Mouse-ear cress)).